The chain runs to 207 residues: Large ribosomal subunit protein bL25 (207 aa).

The interval E171 to E207 is disordered. Residues E196–E207 show a composition bias toward basic and acidic residues.

Belongs to the bacterial ribosomal protein bL25 family. CTC subfamily. Part of the 50S ribosomal subunit; part of the 5S rRNA/L5/L18/L25 subcomplex. Contacts the 5S rRNA. Binds to the 5S rRNA independently of L5 and L18.

Its function is as follows. This is one of the proteins that binds to the 5S RNA in the ribosome where it forms part of the central protuberance. This is Large ribosomal subunit protein bL25 from Listeria innocua serovar 6a (strain ATCC BAA-680 / CLIP 11262).